We begin with the raw amino-acid sequence, 87 residues long: Cell division topological specificity factor (87 aa).

The protein belongs to the MinE family.

Its function is as follows. Prevents the cell division inhibition by proteins MinC and MinD at internal division sites while permitting inhibition at polar sites. This ensures cell division at the proper site by restricting the formation of a division septum at the midpoint of the long axis of the cell. The polypeptide is Cell division topological specificity factor (Roseiflexus sp. (strain RS-1)).